A 332-amino-acid polypeptide reads, in one-letter code: Capsular polysaccharide phosphotransferase WcwK (332 aa).

This sequence belongs to the stealth family.

The polypeptide is Capsular polysaccharide phosphotransferase WcwK (wcwK) (Streptococcus pneumoniae).